The primary structure comprises 453 residues: 3-phosphoshikimate 1-carboxyvinyltransferase (453 aa).

The tract at residues 1–25 (MSHDSEPQPVTAHPAGPLTGALKPP) is disordered. 3 residues coordinate 3-phosphoshikimate: Lys28, Ser29, and Arg33. Lys28 provides a ligand contact to phosphoenolpyruvate. The phosphoenolpyruvate site is built by Gly101 and Arg129. Residues Ser175, Gln177, Asp330, and Lys357 each coordinate 3-phosphoshikimate. Position 177 (Gln177) interacts with phosphoenolpyruvate. Asp330 functions as the Proton acceptor in the catalytic mechanism. Residues Arg361 and Arg405 each coordinate phosphoenolpyruvate.

It belongs to the EPSP synthase family. Monomer.

Its subcellular location is the cytoplasm. It carries out the reaction 3-phosphoshikimate + phosphoenolpyruvate = 5-O-(1-carboxyvinyl)-3-phosphoshikimate + phosphate. It functions in the pathway metabolic intermediate biosynthesis; chorismate biosynthesis; chorismate from D-erythrose 4-phosphate and phosphoenolpyruvate: step 6/7. In terms of biological role, catalyzes the transfer of the enolpyruvyl moiety of phosphoenolpyruvate (PEP) to the 5-hydroxyl of shikimate-3-phosphate (S3P) to produce enolpyruvyl shikimate-3-phosphate and inorganic phosphate. The polypeptide is 3-phosphoshikimate 1-carboxyvinyltransferase (Methylorubrum populi (strain ATCC BAA-705 / NCIMB 13946 / BJ001) (Methylobacterium populi)).